A 38-amino-acid polypeptide reads, in one-letter code: Large ribosomal subunit protein bL36 (38 aa).

It belongs to the bacterial ribosomal protein bL36 family.

This chain is Large ribosomal subunit protein bL36, found in Acinetobacter baylyi (strain ATCC 33305 / BD413 / ADP1).